Here is a 162-residue protein sequence, read N- to C-terminus: uncharacterized protein (162 aa).

This is an uncharacterized protein from Sputnik virophage.